Here is a 473-residue protein sequence, read N- to C-terminus: Zinc finger and SCAN domain-containing protein 21 (473 aa).

Residue lysine 27 forms a Glycyl lysine isopeptide (Lys-Gly) (interchain with G-Cter in SUMO2) linkage. The SCAN box domain maps to 45 to 127 (RQRFRQFGYH…TLLEDLEREL (83 aa)). The interval 127–169 (LDEPGHQVSTPPNEQKPVWEKISSSGTAKESPSSMQPQPLETS) is disordered. Residues 148 to 167 (ISSSGTAKESPSSMQPQPLE) are compositionally biased toward polar residues. Glycyl lysine isopeptide (Lys-Gly) (interchain with G-Cter in SUMO2) cross-links involve residues lysine 221 and lysine 232. The disordered stretch occupies residues 244–272 (LENEKGTKPPLQEAGSKKGRESVPTKPTP). A compositionally biased stretch (basic and acidic residues) spans 258–272 (GSKKGRESVPTKPTP). 7 C2H2-type zinc fingers span residues 277–299 (YICAECGKAFSNSSNLTKHRRTH), 305–327 (YVCTKCGKAFSHSSNLTLHYRTH), 333–354 (YDCKCGKAFGQSSDLLKHQRMH), 360–382 (YQCKDCGKAFSGKGSLIRHYRIH), 388–410 (YQCNECGKSFSQHAGLSSHQRLH), 416–438 (YKCKECGKAFNHSSNFNKHHRIH), and 444–466 (YWCHHCGKTFCSKSNLSKHQRVH). A Glycyl lysine isopeptide (Lys-Gly) (interchain with G-Cter in SUMO2) cross-link involves residue lysine 349.

This sequence belongs to the krueppel C2H2-type zinc-finger protein family.

Its subcellular location is the nucleus. Its function is as follows. Strong transcriptional activator. Plays an important role in spermatogenesis; essential for the progression of meiotic prophase I in spermatocytes. The polypeptide is Zinc finger and SCAN domain-containing protein 21 (ZSCAN21) (Homo sapiens (Human)).